Here is a 259-residue protein sequence, read N- to C-terminus: Small ribosomal subunit protein mS23 (259 aa).

It belongs to the mitochondrion-specific ribosomal protein mS23 family. In terms of assembly, component of the mitochondrial small ribosomal subunit.

It is found in the mitochondrion. The sequence is that of Small ribosomal subunit protein mS23 (RSM25) from Pyricularia oryzae (strain 70-15 / ATCC MYA-4617 / FGSC 8958) (Rice blast fungus).